Consider the following 215-residue polypeptide: Large ribosomal subunit protein uL4 (215 aa).

Positions 43–97 are disordered; the sequence is RRQGTHSTKTRAEVSGGGKKPWRQKGTGRARAGSTRSPIWVGGGKTHTPKPRDYS.

This sequence belongs to the universal ribosomal protein uL4 family. As to quaternary structure, part of the 50S ribosomal subunit.

Its function is as follows. One of the primary rRNA binding proteins, this protein initially binds near the 5'-end of the 23S rRNA. It is important during the early stages of 50S assembly. It makes multiple contacts with different domains of the 23S rRNA in the assembled 50S subunit and ribosome. Functionally, forms part of the polypeptide exit tunnel. This chain is Large ribosomal subunit protein uL4, found in Brachyspira pilosicoli (Serpulina pilosicoli).